The sequence spans 1265 residues: MITGLSIHNQINKKNEPVKKEQNIQAFVRVRPFSVYELNQGVTTVPIRVSDSSKEVLCEYKGTTRQYKFDHVFDQDSIQSEVFNIAVKPICDEVLLGFNGTIFVYGQTGTGKTHTMEGKHGSNEDMGIIPRTINYLFQCLEQSGADYNIRASHLEIYKEEIFDLLACNGNENLNKPLGMFDTQKGFKIPELEEIVVNDRQSILNVLAKSCKRRQTAETQYNKQSSRSHCIFSITVHVKETSVGGEDLIKIGKLNLVDLAGSENAEKSGNNDRLREAALINKSLLTLGKVITDLTNNEKHIPYRSSQLTKILQDSLGGKTKTSIIATVSPSLVNLEETINTLEYALKAKNIKNTPQINQRMSKNSLLKEQSSEIAHLKQLLQAAYDKNGVYLTIDVYEQMKRELEEKCSQQSITEHKMEAQRHEISSMRKSFDEQTMLFEEAMNELESSKKQQQEKQKFIDQFISQDTMLRSNLGSAVQDLSKLHEKLDTMKSTERENQKSIIDSKSILSKRLTDLNQMLVSKLQMGQNELLESLSVQLKVVHDQQTKSNQLIGKRINNLSQLIDSSVLQIQQLNNDDKQQTQPLLKLNKESNDLFMKLDKTIQQLSDQIKIILSDFSLPFFNSNNNNSNNGDEIIDDSLINNCFKLINDHVNKSDLIVSQQNKLIQEFSESMSQWMLHQSQYIIEQRDYQKQLKEKQILNNTQWEKKLLSKLGQVIQQFSKNFTDSTSVYYDTMDNNLQHFEKQFNSINNHSRQQVESLSNNLQQSSTLSHQFESTVKSVLNDHHANNKKVDPKLIESIEKAKKRINQLTDGCIDLSQRQRQCTNQFNEAFTDFTFGIQSQKDILDRVIIEKNQVHEILPLIEKSKSTFKENIDTLIHSLDSRKSIIQSSTNECSNQLNSLISSIPSYLDSAIKVTSKSGETPSKKHFDIPSPISTSSSSSSSSSISSIHSNAGGKENNHQSINNSIKSNNFDGSKSINCDNMKIDTPQKSSTIPITPKSLKLNLNSTPKSVSKNLKSSQQQQPLIVPSSNQLTLSAKKLSNKEYQRLQQQQQQQQQEQQQQQSAKKKKLAIEKQLMITTSPTLSLVNESPFSSPKLSKQKILQDQIQPPQPPSILSQLNSTPISFLQPQQPQQQPPSFFNNLNGSFNRGNNSIDFSLLDDDSDSDNSDDDVRSLLSSNKKSSRASKNAVVSKKVGLTPSRKLKGVNSSANQSLNVKKSKPILTSLSKKQNISTPIIHSSKPSIFGGGSTISSKLKSLKQQTPLK.

The Kinesin motor domain occupies 23–350 (NIQAFVRVRP…LEYALKAKNI (328 aa)). 106–113 (GQTGTGKT) is an ATP binding site. A coiled-coil region spans residues 331–459 (LVNLEETINT…KQQQEKQKFI (129 aa)). Disordered stretches follow at residues 918–1026 (KSGE…QPLI), 1085–1119 (SLVN…LSQL), 1127–1146 (LQPQ…LNGS), 1158–1214 (LLDD…NQSL), and 1245–1265 (FGGG…TPLK). The span at 930-951 (IPSPISTSSSSSSSSSISSIHS) shows a compositional bias: low complexity. Polar residues-rich tracts occupy residues 960–980 (HQSI…SINC), 1003–1026 (LNLN…QPLI), and 1085–1097 (SLVN…SPKL). Low complexity-rich tracts occupy residues 1100–1119 (QKIL…LSQL) and 1128–1146 (QPQQ…LNGS). Positions 1158 to 1169 (LLDDDSDSDNSD) are enriched in acidic residues. Residues 1174-1195 (SLLSSNKKSSRASKNAVVSKKV) are compositionally biased toward low complexity. The span at 1250–1265 (TISSKLKSLKQQTPLK) shows a compositional bias: polar residues.

It belongs to the TRAFAC class myosin-kinesin ATPase superfamily. Kinesin family. BimC subfamily.

The protein resides in the cytoplasm. It localises to the cytoskeleton. In terms of biological role, microtubule-associated force-producing protein that plays a role in organelle transport. Its motor activity is directed toward the microtubule's plus end. Cooperates with dynein to control the spindle elongation rate, but is dispensable for mitosis. The polypeptide is Kinesin-related protein 13 (kif13) (Dictyostelium discoideum (Social amoeba)).